Consider the following 353-residue polypeptide: MAAPAQQTTQPGGGKRKGKAQYVLAKRARRCDAGGPRQLEPGLQGILITCNMNERKCVEEAYSLLNEYGDDMYGPEKFTDKDQQPSGSEGEDDDAEAALKKEVGDIKASTEMRLRRFQSVESGANNVVFIRTLGIEPEKLVHHILQDMYKTKKKKTRVILRMLPISGTCKAFLEDMKKYAETFLEPWFKAPNKGTFQIVYKSRNNSHVNREEVIRELAGIVCTLNSENKVDLTNPQYTVVVEIIKAVCCLSVVKDYMLFRKYNLQEVVKSPKDPSQLNSKQGNGKEAKLESADKSDQNNTAEGKNNQQVPENTEELGQTKPTSNPQVVNEGGAKPELASQATEGSKSNENDFS.

Over residues 1-10 (MAAPAQQTTQ) the composition is skewed to polar residues. Disordered stretches follow at residues 1-20 (MAAP…KGKA) and 73-96 (YGPE…DDAE). At Ala2 the chain carries N-acetylalanine. Thr79 is modified (phosphothreonine). Residues Ser86, Ser88, and Ser119 each carry the phosphoserine modification. The THUMP domain occupies 147–254 (DMYKTKKKKT…KAVCCLSVVK (108 aa)). Ser270 carries the post-translational modification Phosphoserine. The interval 270-353 (SPKDPSQLNS…GSKSNENDFS (84 aa)) is disordered. The segment covering 273-282 (DPSQLNSKQG) has biased composition (polar residues). Basic and acidic residues predominate over residues 283-296 (NGKEAKLESADKSD). Polar residues predominate over residues 297 to 327 (QNNTAEGKNNQQVPENTEELGQTKPTSNPQV).

The protein belongs to the THUMPD1 family. As to quaternary structure, interacts with NAT10. Binds tRNA.

Functionally, functions as a tRNA-binding adapter to mediate NAT10-dependent tRNA acetylation modifying cytidine to N4-acetylcytidine (ac4C). The protein is THUMP domain-containing protein 1 (THUMPD1) of Homo sapiens (Human).